The sequence spans 417 residues: Gamma-glutamyl phosphate reductase (417 aa).

This sequence belongs to the gamma-glutamyl phosphate reductase family.

The protein resides in the cytoplasm. The catalysed reaction is L-glutamate 5-semialdehyde + phosphate + NADP(+) = L-glutamyl 5-phosphate + NADPH + H(+). Its pathway is amino-acid biosynthesis; L-proline biosynthesis; L-glutamate 5-semialdehyde from L-glutamate: step 2/2. Catalyzes the NADPH-dependent reduction of L-glutamate 5-phosphate into L-glutamate 5-semialdehyde and phosphate. The product spontaneously undergoes cyclization to form 1-pyrroline-5-carboxylate. In Hydrogenovibrio crunogenus (strain DSM 25203 / XCL-2) (Thiomicrospira crunogena), this protein is Gamma-glutamyl phosphate reductase.